The following is a 254-amino-acid chain: Anamorsin homolog (254 aa).

Positions 4 to 133 (VQENNHVLYL…EVGSKSKLSF (130 aa)) are N-terminal SAM-like domain. Residues 134–165 (AKKSNVAAVWKLDDNEEEERIDDEELLDEDDK) are linker. [2Fe-2S] cluster is bound by residues Cys176, Cys185, Cys188, and Cys190. A fe-S binding site A region spans residues 176 to 190 (CGTTGKRKACKDCSC). Positions 215, 218, 226, and 229 each coordinate [4Fe-4S] cluster. Short sequence motifs (cx2C motif) lie at residues 215–218 (CGSC) and 226–229 (CATC). Positions 215–229 (CGSCYLGDAFRCATC) are fe-S binding site B.

This sequence belongs to the anamorsin family. In terms of assembly, monomer. It depends on [2Fe-2S] cluster as a cofactor. The cofactor is [4Fe-4S] cluster.

The protein resides in the cytoplasm. It localises to the mitochondrion intermembrane space. Its function is as follows. Component of the cytosolic iron-sulfur (Fe-S) protein assembly (CIA) machinery. Required for the maturation of extramitochondrial Fe-S proteins. Part of an electron transfer chain functioning in an early step of cytosolic Fe-S biogenesis, facilitating the de novo assembly of a [4Fe-4S] cluster on the cytosolic Fe-S scaffold complex. Electrons are transferred from NADPH via a FAD- and FMN-containing diflavin oxidoreductase. Together with the diflavin oxidoreductase, also required for the assembly of the diferric tyrosyl radical cofactor of ribonucleotide reductase (RNR), probably by providing electrons for reduction during radical cofactor maturation in the catalytic small subunit. This chain is Anamorsin homolog, found in Anopheles gambiae (African malaria mosquito).